The sequence spans 168 residues: Probable acetolactate synthase small subunit (168 aa).

The 75-residue stretch at 10 to 84 (IISALVEHKP…DVIKVRDLEP (75 aa)) folds into the ACT domain.

This sequence belongs to the acetolactate synthase small subunit family. In terms of assembly, dimer of large and small chains.

The catalysed reaction is 2 pyruvate + H(+) = (2S)-2-acetolactate + CO2. It participates in amino-acid biosynthesis; L-isoleucine biosynthesis; L-isoleucine from 2-oxobutanoate: step 1/4. It functions in the pathway amino-acid biosynthesis; L-valine biosynthesis; L-valine from pyruvate: step 1/4. This chain is Probable acetolactate synthase small subunit (ilvH), found in Methanothermobacter thermautotrophicus (strain ATCC 29096 / DSM 1053 / JCM 10044 / NBRC 100330 / Delta H) (Methanobacterium thermoautotrophicum).